The sequence spans 558 residues: uncharacterized protein (558 aa).

The tract at residues 396-420 (SSITDNDTDNDSGATESQQTDSEND) is disordered. Residues 407–416 (SGATESQQTD) show a composition bias toward polar residues.

It belongs to the chlamydial CPn_0065/CT_288/TC_0561 family.

This is an uncharacterized protein from Chlamydia muridarum (strain MoPn / Nigg).